We begin with the raw amino-acid sequence, 143 residues long: Phosphoribosyl-AMP cyclohydrolase (143 aa).

A Mg(2+)-binding site is contributed by Asp86. Residue Cys87 participates in Zn(2+) binding. Residues Asp88 and Asp90 each contribute to the Mg(2+) site. Zn(2+) is bound by residues Cys103 and Cys110.

Belongs to the PRA-CH family. In terms of assembly, homodimer. The cofactor is Mg(2+). Requires Zn(2+) as cofactor.

The protein localises to the cytoplasm. The catalysed reaction is 1-(5-phospho-beta-D-ribosyl)-5'-AMP + H2O = 1-(5-phospho-beta-D-ribosyl)-5-[(5-phospho-beta-D-ribosylamino)methylideneamino]imidazole-4-carboxamide. The protein operates within amino-acid biosynthesis; L-histidine biosynthesis; L-histidine from 5-phospho-alpha-D-ribose 1-diphosphate: step 3/9. Functionally, catalyzes the hydrolysis of the adenine ring of phosphoribosyl-AMP. The polypeptide is Phosphoribosyl-AMP cyclohydrolase (Rhodospirillum rubrum (strain ATCC 11170 / ATH 1.1.1 / DSM 467 / LMG 4362 / NCIMB 8255 / S1)).